We begin with the raw amino-acid sequence, 336 residues long: MALKHFLNTQDWSCSELNALLTQARAFKHNKLGNGLKGKSIALVFFNASMRTRSSFELGAFQLGGHAIVLQPGKDAWPIEFDTGTVMEAETEEHICEVARVLGHYVDLIGVRAFPKFLDWTYDRQDIVLNGFAKYSPVPVINMETITHPCQELAHIMALQEHFGTTDLRGKKYVLTWTYHPKPLNTAVANSALTIATRLGMDVTLLCPTPDYVLDERYIDWAQQNIADTGSTFQVSHDIDNAYRGADVIYAKSWGALPFFGNWAMEKPIRDQYRHFIVDEAKMALTNNAVFSHCLPLRRNVKATDAVMDGPNCIAIHEAGNRLHVQKAIMAALASQ.

Residues 49–52, tryptophan 77, and arginine 112 each bind carbamoyl phosphate; that span reads SMRT. Position 144 (glutamate 144) interacts with N(2)-acetyl-L-ornithine. Residue 148 to 151 coordinates carbamoyl phosphate; sequence HPCQ. 2 residues coordinate N(2)-acetyl-L-ornithine: lysine 252 and leucine 295. Position 294–295 (294–295) interacts with carbamoyl phosphate; it reads CL. N6-carboxylysine is present on lysine 302. Arginine 322 contacts carbamoyl phosphate.

Belongs to the aspartate/ornithine carbamoyltransferase superfamily. AOTCase family. As to quaternary structure, homotrimer.

Its subcellular location is the cytoplasm. The enzyme catalyses N(2)-acetyl-L-ornithine + carbamoyl phosphate = N(2)-acetyl-L-citrulline + phosphate + H(+). Its pathway is amino-acid biosynthesis; L-arginine biosynthesis. Its activity is regulated as follows. Carboxylation at Lys-302 increases the catalytic activity of the enzyme. Catalyzes the transfer of the carbamoyl group from carbamoyl phosphate to the delta-amino group of N(2)-acetyl-L-ornithine to produce N(2)-acetyl-L-citrulline. This is a step in an alternative arginine biosynthesis pathway. The enzyme has no activity with ornithine. This is N-acetylornithine carbamoyltransferase from Xylella fastidiosa (strain 9a5c).